Consider the following 120-residue polypeptide: Small ribosomal subunit protein uS13m (120 aa).

It belongs to the universal ribosomal protein uS13 family. In terms of assembly, part of the small ribosomal subunit.

Its subcellular location is the mitochondrion. Functionally, located at the top of the head of the small subunit, it contacts several helices of the 18S rRNA. In Marchantia polymorpha (Common liverwort), this protein is Small ribosomal subunit protein uS13m (RPS13).